The sequence spans 777 residues: Glucocorticoid receptor (777 aa).

Over residues 1-14 the composition is skewed to basic and acidic residues; that stretch reads MDSKESLTPGREEN. Residues 1-23 are disordered; that stretch reads MDSKESLTPGREENPSSVLAQER. The modulating stretch occupies residues 1–420; that stretch reads MDSKESLTPG…TATTGPPPKL (420 aa). Thr8 is modified (phosphothreonine). Omega-N-methylarginine is present on Arg23. 4 positions are modified to phosphoserine: Ser45, Ser113, Ser134, and Ser141. The span at 130-140 shows a compositional bias: polar residues; sequence NRSTSVPENPK. Positions 130–183 are disordered; it reads NRSTSVPENPKSSASTAVSAAPTEKEFPKTHSDISSEQQHLKGQTGTNGGNVKL. Residues 141–150 are compositionally biased toward low complexity; that stretch reads SSASTAVSAA. Positions 152–163 are enriched in basic and acidic residues; that stretch reads TEKEFPKTHSDI. Positions 164-174 are enriched in polar residues; the sequence is SSEQQHLKGQT. Residues Ser203, Ser211, and Ser226 each carry the phosphoserine modification. Residue Lys258 forms a Glycyl lysine isopeptide (Lys-Gly) (interchain with G-Cter in SUMO2) linkage. Ser267 bears the Phosphoserine mark. Residues Lys277 and Lys293 each participate in a glycyl lysine isopeptide (Lys-Gly) (interchain with G-Cter in SUMO); alternate cross-link. Residues Lys277 and Lys293 each participate in a glycyl lysine isopeptide (Lys-Gly) (interchain with G-Cter in SUMO2); alternate cross-link. Low complexity predominate over residues 394 to 414; sequence SSPSMRPDVSSPPSSSSTATT. A disordered region spans residues 394-415; sequence SSPSMRPDVSSPPSSSSTATTG. At Ser404 the chain carries Phosphoserine. A Glycyl lysine isopeptide (Lys-Gly) (interchain with G-Cter in ubiquitin) cross-link involves residue Lys419. NR C4-type zinc fingers lie at residues 421–441 and 457–476; these read CLVCSDEASGCHYGVLTCGSC and CAGRNDCIIDKIRRKNCPAC. A DNA-binding region (nuclear receptor) is located at residues 421–486; that stretch reads CLVCSDEASG…RYRKCLQAGM (66 aa). An N6-acetyllysine mark is found at Lys480, Lys492, Lys494, and Lys495. The interval 485–777 is interaction with CLOCK; that stretch reads GMNLEARKTK…NIKKLLFHQK (293 aa). Residues 487 to 523 are hinge; it reads NLEARKTKKKIKGIQQATTGVSQETPENPANKTIVPA. The region spanning 524-758 is the NR LBD domain; the sequence is TLPQLTPTLV…FPEMLAEIIT (235 aa). The interval 532-697 is interaction with CRY1; that stretch reads LVSLLEVIEP…EIRMTYIKEL (166 aa). Lys703 participates in a covalent cross-link: Glycyl lysine isopeptide (Lys-Gly) (interchain with G-Cter in SUMO).

This sequence belongs to the nuclear hormone receptor family. NR3 subfamily. In terms of assembly, heteromultimeric cytoplasmic complex with HSP90AA1, HSPA1A/HSPA1B, and FKBP5 or another immunophilin such as PPID, STIP1, or the immunophilin homolog PPP5C. Upon ligand binding FKBP5 dissociates from the complex and FKBP4 takes its place, thereby linking the complex to dynein and mediating transport to the nucleus, where the complex dissociates. Probably forms a complex composed of chaperones HSP90 and HSP70, co-chaperones CDC37, PPP5C, TSC1 and client protein TSC2, CDK4, AKT, RAF1 and NR3C1; this complex does not contain co-chaperones STIP1/HOP and PTGES3/p23. Directly interacts with UNC45A. Binds to DNA as a homodimer, and as heterodimer with NR3C2 or the retinoid X receptor. Binds STAT5A and STAT5B homodimers and heterodimers. Interacts with NRIP1, POU2F1, POU2F2 and TRIM28. Interacts with several coactivator complexes, including the SMARCA4 complex, CREBBP/EP300, TADA2L (Ada complex) and p160 coactivators such as NCOA2 and NCOA6. Interaction with BAG1 inhibits transactivation. Interacts with HEXIM1 and TGFB1I1. Interacts with NCOA1. Interacts with NCOA3, SMARCA4, SMARCC1, SMARCD1, and SMARCE1. Interacts with CLOCK, CRY1 and CRY2 in a ligand-dependent fashion. Interacts with CIART. Interacts with RWDD3. Interacts with UBE2I/UBC9 and this interaction is enhanced in the presence of RWDD3. Interacts with GRIP1. Interacts with NR4A3 (via nuclear receptor DNA-binding domain), represses transcription activity of NR4A3 on the POMC promoter Nur response element (NurRE). Directly interacts with PNRC2 to attract and form a complex with UPF1 and DCP1A; the interaction leads to rapid mRNA degradation. Interacts with GSK3B. Interacts with FNIP1 and FNIP2. Interacts (via C-terminus) with HNRNPU (via C-terminus). Interacts with MCM3AP. Interacts (via domain NR LBD) with HSP90AA1 and HSP90AB1. In the absence of hormonal ligand, interacts with TACC1. Interacts (via NR LBD domain) with ZNF764 (via KRAB domain); the interaction regulates transcription factor activity of NR3C1 by directing its actions toward certain biologic pathways. Acetylation by CLOCK reduces its binding to glucocorticoid response elements and its transcriptional activity. Post-translationally, increased proteasome-mediated degradation in response to glucocorticoids. In terms of processing, phosphorylated in the absence of hormone; becomes hyperphosphorylated in the presence of glucocorticoid. The Ser-203, Ser-226 and Ser-404-phosphorylated forms are mainly cytoplasmic, and the Ser-211-phosphorylated form is nuclear. Phosphorylation at Ser-211 increases transcriptional activity. Phosphorylation at Ser-203, Ser-226 and Ser-404 decreases signaling capacity. Phosphorylation at Ser-404 may protect from glucocorticoid-induced apoptosis. Phosphorylation at Ser-203 and Ser-211 is not required in regulation of chromosome segregation. May be dephosphorylated by PPP5C, attenuates NR3C1 action. Ubiquitinated by UBR5, leading to its degradation: UBR5 specifically recognizes and binds ligand-bound NR3C1 when it is not associated with coactivators (NCOAs). In presence of NCOAs, the UBR5-degron is not accessible, preventing its ubiquitination and degradation. Post-translationally, sumoylation at Lys-277 and Lys-293 negatively regulates its transcriptional activity. Sumoylation at Lys-703 positively regulates its transcriptional activity in the presence of RWDD3. Sumoylation at Lys-277 and Lys-293 is dispensable whereas sumoylation at Lys-703 is critical for the stimulatory effect of RWDD3 on its transcriptional activity. Heat shock increases sumoylation in a RWDD3-dependent manner.

It localises to the cytoplasm. The protein localises to the nucleus. The protein resides in the mitochondrion. It is found in the cytoskeleton. Its subcellular location is the spindle. It localises to the microtubule organizing center. The protein localises to the centrosome. The protein resides in the chromosome. It is found in the nucleoplasm. Receptor for glucocorticoids (GC). Has a dual mode of action: as a transcription factor that binds to glucocorticoid response elements (GRE), both for nuclear and mitochondrial DNA, and as a modulator of other transcription factors. Affects inflammatory responses, cellular proliferation and differentiation in target tissues. Involved in chromatin remodeling. Plays a role in rapid mRNA degradation by binding to the 5' UTR of target mRNAs and interacting with PNRC2 in a ligand-dependent manner which recruits the RNA helicase UPF1 and the mRNA-decapping enzyme DCP1A, leading to RNA decay. Could act as a coactivator for STAT5-dependent transcription upon growth hormone (GH) stimulation and could reveal an essential role of hepatic GR in the control of body growth. Mediates glucocorticoid-induced apoptosis. Promotes accurate chromosome segregation during mitosis. May act as a tumor suppressor. May play a negative role in adipogenesis through the regulation of lipolytic and antilipogenic gene expression. The protein is Glucocorticoid receptor (NR3C1) of Pongo abelii (Sumatran orangutan).